Consider the following 185-residue polypeptide: Ribosome-recycling factor (185 aa).

This sequence belongs to the RRF family.

The protein localises to the cytoplasm. In terms of biological role, responsible for the release of ribosomes from messenger RNA at the termination of protein biosynthesis. May increase the efficiency of translation by recycling ribosomes from one round of translation to another. The chain is Ribosome-recycling factor from Glaesserella parasuis serovar 5 (strain SH0165) (Haemophilus parasuis).